The primary structure comprises 210 residues: Protein PF1979 (210 aa).

In terms of domain architecture, AMMECR1 spans 7 to 201; the sequence is EWGEFLVRLA…EEYPRGPVKR (195 aa).

This chain is Protein PF1979, found in Pyrococcus furiosus (strain ATCC 43587 / DSM 3638 / JCM 8422 / Vc1).